Reading from the N-terminus, the 2144-residue chain is Cadherin EGF LAG seven-pass G-type receptor 2 (2144 aa).

Cadherin domains are found at residues 1 to 40 (EDQV…APQF), 41 to 146 (LRDS…PPVF), 147 to 248 (EQDE…PPVL), and 253 to 371 (ILFN…SPLL). Topologically, residues 1 to 1605 (EDQVSYTLAI…GEILPLKTLT (1605 aa)) are extracellular. N-linked (GlcNAc...) asparagine glycans are attached at residues N261, N301, N407, and N437. The EGF-like 1; calcium-binding domain maps to 453–511 (DDNICLREPCENYMRCVSVLRFDSSAPFIASSSVLFRPIHPVGGLRCRCPPGFTGDYCE). 9 disulfides stabilise this stretch: C457–C468, C462–C499, C501–C510, C517–C528, C522–C537, C539–C548, C557–C568, C562–C578, and C580–C590. In terms of domain architecture, EGF-like 2; calcium-binding spans 513-549 (EVDLCYSRPCGPHGHCRSREGGYTCLCRDGYTGEHCE). Residues 553 to 591 (RSGRCTPGVCKNGGTCVNLLVGGFKCDCPSGDFEKPFCQ) enclose the EGF-like 3; calcium-binding domain. A Laminin G-like 1 domain is found at 592-796 (VTTRSFPARS…IANNGTVPGC (205 aa)). 2 N-linked (GlcNAc...) asparagine glycosylation sites follow: N726 and N790. Intrachain disulfides connect C770–C796, C803–C814, C808–C823, and C825–C834. The region spanning 799-835 (KKNVCDSNTCHNGGTCVNQWDAFSCECPLGFGGKSCA) is the EGF-like 4; calcium-binding domain. N816 carries the post-translational modification (3R)-3-hydroxyasparagine. Residues 839–1016 (ANPQRFLGSS…GESINVEPGC (178 aa)) form the Laminin G-like 2 domain. N-linked (GlcNAc...) asparagine glycosylation is present at N966. 14 disulfides stabilise this stretch: C986–C1016, C1022–C1033, C1027–C1042, C1044–C1053, C1057–C1068, C1062–C1080, C1082–C1091, C1112–C1124, C1114–C1131, C1133–C1146, C1149–C1161, C1151–C1168, C1170–C1179, and C1182–C1194. Positions 1018 to 1053 (WPDPCDSNPCPTNSYCSNDWDSYSCSCDPGYYGDNC) constitute an EGF-like 5; calcium-binding domain. N1035 carries the (3R)-3-hydroxyasparagine modification. An N-linked (GlcNAc...) asparagine glycan is attached at N1052. An EGF-like 6; calcium-binding domain is found at 1054–1092 (TNVCDLNPCEHQSACTRKPSAPHGYICECLPNYLGPYCE). The EGF-like 7; calcium-binding domain occupies 1108–1147 (TCGPCNCDVSKGFDPDCNKTSGECHCKENHYRPPSSPTCL). N1125 carries an N-linked (GlcNAc...) asparagine glycan. The 48-residue stretch at 1149–1196 (CDCYPTGSLSRVCDPEDGQCPCKPGVIGRQCDRCDNPFAEVTTNGCEV) folds into the Laminin EGF-like domain. N1249, N1268, and N1286 each carry an N-linked (GlcNAc...) asparagine glycan. The 171-residue stretch at 1424-1594 (ETTVILPESV…AVLMDVSRRE (171 aa)) folds into the GAIN-B domain. The interval 1439-1466 (PMVRSAGPGEAQETEELARRQRRHPELS) is disordered. Cystine bridges form between C1544–C1576 and C1564–C1578. The segment at 1544–1594 (CVFWNHSILVSGTGGWSARGCEVVFRNESHVSCQCNHMTSFAVLMDVSRRE) is GPS. N-linked (GlcNAc...) asparagine glycosylation is found at N1548 and N1570. The chain crosses the membrane as a helical span at residues 1606–1626 (YVALGVTLAALMITFLFLTLL). Topologically, residues 1627-1641 (RALRSNQHGIRRNLT) are cytoplasmic. The helical transmembrane segment at 1642-1662 (AALGLAQLVFLLGINQADLPF) threads the bilayer. A topological domain (extracellular) is located at residue A1663. A helical transmembrane segment spans residues 1664-1684 (CTVIAILLHFLYLCTFSWALL). Over 1685–1705 (EALHLYRALTEVRDVNASPMR) the chain is Cytoplasmic. Residues 1706–1726 (FYYMLGWGVPAFITGLAVGLD) traverse the membrane as a helical segment. The Extracellular segment spans residues 1727–1744 (PEGYGNPDFCWLSIYDTL). Residues 1745–1765 (IWSFAGPVAFAVSMSVFLYIL) traverse the membrane as a helical segment. Residues 1766–1789 (SARASCAAQRQGFEKKGPVSGLRS) are Cytoplasmic-facing. A helical membrane pass occupies residues 1790–1810 (SFTVLLLLSATWLLALLSVNS). The Extracellular portion of the chain corresponds to 1811 to 1816 (DTLLFH). The chain crosses the membrane as a helical span at residues 1817-1837 (YLFAACNCVQGPFIFLSYVVL). Residues 1838-2144 (SKEVRKALKF…SEFLFFNFLH (307 aa)) lie on the Cytoplasmic side of the membrane. Residues 1914 to 2109 (TLNPGQVPPG…PPRPPPRQSL (196 aa)) form a disordered region. Acidic residues predominate over residues 1943 to 1955 (TDSDSDLSLEDDQ). Residues 2016–2025 (GTTTKENSGS) are compositionally biased toward polar residues. A compositionally biased stretch (basic and acidic residues) spans 2028–2040 (LEERPRENGDALT). The segment covering 2082-2095 (GTGSSRGSTASEGS) has biased composition (polar residues).

The protein belongs to the G-protein coupled receptor 2 family. LN-TM7 subfamily. In terms of assembly, heterodimer of 2 chains generated by proteolytic processing; the large extracellular N-terminal fragment and the membrane-bound C-terminal fragment predominantly remain associated and non-covalently linked. The iron and 2-oxoglutarate dependent 3-hydroxylation of aspartate and asparagine is (R) stereospecific within EGF domains. In terms of processing, autoproteolytically processed at the GPS region of the GAIN-B domain; this cleavage modulates receptor activity. In terms of tissue distribution, expressed in the brain. High expression in cerebellum and olfactory bulb. Weaker expression in cerebral cortex, hippocampus and brain stem.

Its subcellular location is the cell membrane. Its function is as follows. Receptor that may have an important role in cell/cell signaling during nervous system formation. This chain is Cadherin EGF LAG seven-pass G-type receptor 2, found in Rattus norvegicus (Rat).